A 348-amino-acid chain; its full sequence is Inosamine-phosphate amidinotransferase 1 (348 aa).

Residues D179 and H227 contribute to the active site. The active-site Amidino-cysteine intermediate is C332.

The protein belongs to the amidinotransferase family. As to quaternary structure, homodimer.

The enzyme catalyses 1-amino-1-deoxy-scyllo-inositol 4-phosphate + L-arginine = 1-guanidino-1-deoxy-scyllo-inositol 4-phosphate + L-ornithine. It participates in antibiotic biosynthesis; streptomycin biosynthesis. In terms of biological role, catalyzes two non-consecutive transamidination reactions. It converts scyllo-inosamine 4-phosphate into N-amidino-scyllo-inosamine 4-phosphate and N1-amidinostreptamine 6-phosphate into streptidine 6-phosphate. The protein is Inosamine-phosphate amidinotransferase 1 (strB1) of Streptomyces glaucescens.